Here is a 394-residue protein sequence, read N- to C-terminus: Small RNA 2'-O-methyltransferase (394 aa).

2 residues coordinate S-adenosyl-L-methionine: aspartate 78 and serine 114. Residues glutamate 132, glutamate 135, histidine 136, and histidine 181 each coordinate Mg(2+).

It belongs to the methyltransferase superfamily. HEN1 family. The cofactor is Mg(2+).

The protein resides in the cytoplasm. The catalysed reaction is small RNA 3'-end nucleotide + S-adenosyl-L-methionine = small RNA 3'-end 2'-O-methylnucleotide + S-adenosyl-L-homocysteine + H(+). Functionally, methyltransferase that adds a 2'-O-methyl group at the 3'-end of piRNAs, a class of 24 to 30 nucleotide RNAs that are generated by a Dicer-independent mechanism and are primarily derived from transposons and other repeated sequence elements. This probably protects the 3'-end of piRNAs from uridylation activity and subsequent degradation. Stabilization of piRNAs is essential for gametogenesis. This is Small RNA 2'-O-methyltransferase (Henmt1) from Rattus norvegicus (Rat).